The chain runs to 421 residues: Gamma-glutamyl phosphate reductase (421 aa).

Belongs to the gamma-glutamyl phosphate reductase family.

It is found in the cytoplasm. The enzyme catalyses L-glutamate 5-semialdehyde + phosphate + NADP(+) = L-glutamyl 5-phosphate + NADPH + H(+). It functions in the pathway amino-acid biosynthesis; L-proline biosynthesis; L-glutamate 5-semialdehyde from L-glutamate: step 2/2. Catalyzes the NADPH-dependent reduction of L-glutamate 5-phosphate into L-glutamate 5-semialdehyde and phosphate. The product spontaneously undergoes cyclization to form 1-pyrroline-5-carboxylate. The protein is Gamma-glutamyl phosphate reductase of Acinetobacter baumannii (strain ACICU).